A 425-amino-acid chain; its full sequence is Glucose-1-phosphate adenylyltransferase (425 aa).

Alpha-D-glucose 1-phosphate-binding positions include Y110, G175, 190-191 (EK), and S208.

Belongs to the bacterial/plant glucose-1-phosphate adenylyltransferase family. Homotetramer.

The catalysed reaction is alpha-D-glucose 1-phosphate + ATP + H(+) = ADP-alpha-D-glucose + diphosphate. Its pathway is glycan biosynthesis; glycogen biosynthesis. Functionally, involved in the biosynthesis of ADP-glucose, a building block required for the elongation reactions to produce glycogen. Catalyzes the reaction between ATP and alpha-D-glucose 1-phosphate (G1P) to produce pyrophosphate and ADP-Glc. This chain is Glucose-1-phosphate adenylyltransferase, found in Nitrosospira multiformis (strain ATCC 25196 / NCIMB 11849 / C 71).